Here is a 276-residue protein sequence, read N- to C-terminus: uncharacterized protein (276 aa).

The region spanning 20 to 137 is the AB hydrolase-1 domain; sequence PVLIFIPGAN…PPINTFLPDS (118 aa). Residues 57–76 form a disordered region; the sequence is GESELTEPLPDSASNPDSDY.

Belongs to the AB hydrolase superfamily.

This is an uncharacterized protein from Staphylococcus aureus (strain USA300).